A 261-amino-acid chain; its full sequence is Cytochrome c oxidase subunit 3 (261 aa).

Topologically, residues 1–15 (MTHQTHAYHMVNPSP) are mitochondrial matrix. A helical membrane pass occupies residues 16–34 (WPLTGALSALLMTSGLIMW). Topologically, residues 35–40 (FHFNST) are mitochondrial intermembrane. Residues 41-66 (ALLMLGLTTNMLTMYQWWRDIIREST) form a helical membrane-spanning segment. The Mitochondrial matrix segment spans residues 67–72 (FQGHHT). The chain crosses the membrane as a helical span at residues 73 to 105 (PVVQKGLRYGMILFIISEVLFFTGFFWAFYHSS). Topologically, residues 106–128 (LAPTPELGGCWPPTGINPLNPLE) are mitochondrial intermembrane. The helical transmembrane segment at 129 to 152 (VPLLNTSVLLASGVSITWAHHSLM) threads the bilayer. The Mitochondrial matrix portion of the chain corresponds to 153–155 (EGN). The helical transmembrane segment at 156–183 (RSHMLQALFITITLGVYFTLLQASEYYE) threads the bilayer. The Mitochondrial intermembrane segment spans residues 184–190 (APFTISD). The helical transmembrane segment at 191 to 223 (GVYGSTFFVATGFHGLHVIIGSTFLIVCFFRQL) threads the bilayer. Topologically, residues 224 to 232 (KFHFTSNHH) are mitochondrial matrix. Residues 233 to 256 (FGFEAAAWYWHFVDVVWLFLYVSI) traverse the membrane as a helical segment. Over 257 to 261 (YWWGS) the chain is Mitochondrial intermembrane.

It belongs to the cytochrome c oxidase subunit 3 family. As to quaternary structure, component of the cytochrome c oxidase (complex IV, CIV), a multisubunit enzyme composed of 14 subunits. The complex is composed of a catalytic core of 3 subunits MT-CO1, MT-CO2 and MT-CO3, encoded in the mitochondrial DNA, and 11 supernumerary subunits COX4I, COX5A, COX5B, COX6A, COX6B, COX6C, COX7A, COX7B, COX7C, COX8 and NDUFA4, which are encoded in the nuclear genome. The complex exists as a monomer or a dimer and forms supercomplexes (SCs) in the inner mitochondrial membrane with NADH-ubiquinone oxidoreductase (complex I, CI) and ubiquinol-cytochrome c oxidoreductase (cytochrome b-c1 complex, complex III, CIII), resulting in different assemblies (supercomplex SCI(1)III(2)IV(1) and megacomplex MCI(2)III(2)IV(2)).

Its subcellular location is the mitochondrion inner membrane. It carries out the reaction 4 Fe(II)-[cytochrome c] + O2 + 8 H(+)(in) = 4 Fe(III)-[cytochrome c] + 2 H2O + 4 H(+)(out). Component of the cytochrome c oxidase, the last enzyme in the mitochondrial electron transport chain which drives oxidative phosphorylation. The respiratory chain contains 3 multisubunit complexes succinate dehydrogenase (complex II, CII), ubiquinol-cytochrome c oxidoreductase (cytochrome b-c1 complex, complex III, CIII) and cytochrome c oxidase (complex IV, CIV), that cooperate to transfer electrons derived from NADH and succinate to molecular oxygen, creating an electrochemical gradient over the inner membrane that drives transmembrane transport and the ATP synthase. Cytochrome c oxidase is the component of the respiratory chain that catalyzes the reduction of oxygen to water. Electrons originating from reduced cytochrome c in the intermembrane space (IMS) are transferred via the dinuclear copper A center (CU(A)) of subunit 2 and heme A of subunit 1 to the active site in subunit 1, a binuclear center (BNC) formed by heme A3 and copper B (CU(B)). The BNC reduces molecular oxygen to 2 water molecules using 4 electrons from cytochrome c in the IMS and 4 protons from the mitochondrial matrix. This is Cytochrome c oxidase subunit 3 (MT-CO3) from Syncerus caffer (African buffalo).